A 373-amino-acid chain; its full sequence is P2Y purinoceptor 1 (373 aa).

The Extracellular portion of the chain corresponds to 1-51; the sequence is MTEVLWPAAPNGTDAAFLASPGFHWGNSTATSTAAAAAPFRCALTKTGFQF. N-linked (GlcNAc...) asparagine glycosylation is found at asparagine 11 and asparagine 27. 2 cysteine pairs are disulfide-bonded: cysteine 42–cysteine 296 and cysteine 124–cysteine 202. Lysine 46 contacts ADP. The helical transmembrane segment at 52-74 threads the bilayer; it reads YYLPAVYIVVFIIGFLGNSIAIW. Over 75 to 87 the chain is Cytoplasmic; it reads MFVFHMKPWSGIS. A helical transmembrane segment spans residues 88-109; the sequence is VYMFNLALADFLYVLTLPALIF. The Extracellular portion of the chain corresponds to 110–125; sequence YYFNKTNWIFGDAMCK. Asparagine 113 carries an N-linked (GlcNAc...) asparagine glycan. The chain crosses the membrane as a helical span at residues 126–147; sequence LQRFIFHVNLYGSILFLTCISA. At 148 to 166 the chain is on the cytoplasmic side; that stretch reads HRYSGVVYPLKSLGRLKKK. The chain crosses the membrane as a helical span at residues 167 to 188; it reads NAVYISVLVWLIVVVAISPILF. The Extracellular segment spans residues 189–214; that stretch reads YSGTGIRKNKTITCYDTTSDEYLRSY. A glycan (N-linked (GlcNAc...) asparagine) is linked at asparagine 197. 203-205 contacts ADP; the sequence is YDT. The chain crosses the membrane as a helical span at residues 215–237; the sequence is FIYSMCTTVAMFCVPLVLILGCY. The Cytoplasmic segment spans residues 238–260; the sequence is GLIVRALIYKDLDNSPLRRKSIY. Residues 261 to 284 form a helical membrane-spanning segment; the sequence is LVIIVLTVFAVSYIPFHVMKTMNL. ADP contacts are provided by residues 283-287, 303-306, and arginine 310; these read NLRAR and YATY. Over 285–303 the chain is Extracellular; it reads RARLDFQTPEMCTFNDRVY. Residues 304 to 325 form a helical membrane-spanning segment; that stretch reads ATYQVTRGLASLNSCVDPILYF. At 326 to 373 the chain is on the cytoplasmic side; the sequence is LAGDTFRRRLSRATRKASRRSEANLQSKSEDMTLNILSEFKQNGDTSL.

Belongs to the G-protein coupled receptor 1 family.

The protein resides in the cell membrane. Its function is as follows. Receptor for extracellular adenine nucleotides such as ADP. In platelets, binding to ADP leads to mobilization of intracellular calcium ions via activation of phospholipase C, a change in platelet shape, and ultimately platelet aggregation. This Cavia porcellus (Guinea pig) protein is P2Y purinoceptor 1 (P2RY1).